Reading from the N-terminus, the 319-residue chain is Iron-sulfur cluster transfer protein NUBPL (319 aa).

A mitochondrion-targeting transit peptide spans 1-38 (MGTWRRLLLFGGVSLRGGGAATVPPRGCRALGCGRQLL). Residue 75–82 (GKGGVGKS) coordinates ATP.

Belongs to the Mrp/NBP35 ATP-binding proteins family. [4Fe-4S] cluster serves as cofactor.

The protein localises to the mitochondrion. Its function is as follows. Iron-sulfur cluster transfer protein involved in the assembly of the mitochondrial membrane respiratory chain NADH dehydrogenase (Complex I). May deliver one or more Fe-S clusters to complex I subunits. This chain is Iron-sulfur cluster transfer protein NUBPL (Nubpl), found in Mus musculus (Mouse).